Consider the following 162-residue polypeptide: Epoxidase pydX (162 aa).

Positions 1–26 (MSLIALPLRLLRLLPAITSTWVLAFA) are cleaved as a signal peptide. Helical transmembrane passes span 62–82 (WILIVVYPINYALGVVNLFVG) and 89–109 (TGAMSWYTIGLLFSLAHMGYM). Residues N127 and N139 are each glycosylated (N-linked (GlcNAc...) asparagine).

Belongs to the epoxidase xenD family.

It is found in the membrane. Its pathway is mycotoxin biosynthesis. Epoxidase; part of the gene cluster that mediates the biosynthesis of pyrrocidines, fungal natural products containing a macrocyclic para-cyclophane connected to a decahydrofluorene ring system that show potent antibiotic activities toward Gram-negative bacteria. Within the pathway, pydX functions synergistically with pydB, pydE and pydZ to form the cyclophane. The pathway begins with the PKS-NRPS pydA which, with the help of the trans-enoyl reductase pydC, synthesizes the polyketide-tyrosyl acyl thioester product which can be reductively off-loaded by the terminal reductase (R) domain in pydA. The alpha/beta hydrolase pydG is then required to catalyze the subsequent Knoevenagel condensation that affords the 3-pyrrolin-2-one ring, whereas the four proteins pydB, pydE, pydX and pydZ then function synergistically to form the cyclophane. PydB and the membrane-bound pydX and pydZ are lipid-binding proteins that can sequester and mold the pdyG product into the inverse S-shape. Binding of the medium chain reductase pydE to the complex would trigger the cascade oxidative cyclization. PydY is involved in the Diels-Alder cycloaddition that forms the decahydrofluorene core. Additional non-enzymatic hydroxylation yields pyrrocidine A2 which can be further reduced into pyrrocidine B by an endogenous reductase. The chain is Epoxidase pydX from Acremonium sp.